A 101-amino-acid polypeptide reads, in one-letter code: UPF0213 protein lp_2058 (101 aa).

Positions 15-92 (KKYYFYVLLC…KHQSRAAKLK (78 aa)) constitute a GIY-YIG domain.

Belongs to the UPF0213 family.

The protein is UPF0213 protein lp_2058 of Lactiplantibacillus plantarum (strain ATCC BAA-793 / NCIMB 8826 / WCFS1) (Lactobacillus plantarum).